A 532-amino-acid polypeptide reads, in one-letter code: Fatty aldehyde dehydrogenase HFD1 (532 aa).

At Ser111 the chain carries Phosphoserine. The helical transmembrane segment at 134–152 (IIAPFNFPLLLAFAPLAAA) threads the bilayer. 214 to 219 (GSPRVG) contacts NAD(+). Active-site residues include Glu236 and Cys273.

The protein belongs to the aldehyde dehydrogenase family.

The protein resides in the lipid droplet. The protein localises to the mitochondrion outer membrane. Its subcellular location is the endosome membrane. It is found in the cytoplasmic granule membrane. It carries out the reaction an aldehyde + NAD(+) + H2O = a carboxylate + NADH + 2 H(+). It catalyses the reaction hexadecanoate + NADH + 2 H(+) = hexadecanal + NAD(+) + H2O. The catalysed reaction is 4-hydroxybenzaldehyde + NAD(+) + H2O = 4-hydroxybenzoate + NADH + 2 H(+). Catalyzes the oxidation of long-chain aliphatic aldehydes to fatty acids. Responsible for conversion of the sphingosine 1-phosphate (S1P) degradation product hexadecenal to hexadecenoic acid. Involved in coenzyme Q (CoQ) biosynthesis, catalyzing the last step in the tyrosine to 4-hydroxybenzoate (4-HB) pathway. Oxidizes 4-hydroxybenzaldehyde (4-Hbz) to 4-HB, the aromatic precursor for coenzyme Q. In Saccharomyces cerevisiae (strain ATCC 204508 / S288c) (Baker's yeast), this protein is Fatty aldehyde dehydrogenase HFD1 (HFD1).